We begin with the raw amino-acid sequence, 175 residues long: MADPARAAKLAQRIKVVVAEALGRKVKDPRLEGVTVTDARVTNDLQHATVYYTVFGDETAHADAAKGLEKAKGVLRQEVGRNITVRLTPTLEFVADQIPVVASNLEELLREARKRDAEVAALAATAKHAGEADPYKSDAPEDVDIDEDDFDEEDIDLAGDDDIDEDANKDADSSK.

Positions 125 to 175 (TAKHAGEADPYKSDAPEDVDIDEDDFDEEDIDLAGDDDIDEDANKDADSSK) are disordered. Residues 128–139 (HAGEADPYKSDA) show a composition bias toward basic and acidic residues. A compositionally biased stretch (acidic residues) spans 140–165 (PEDVDIDEDDFDEEDIDLAGDDDIDE). The segment covering 166-175 (DANKDADSSK) has biased composition (basic and acidic residues).

Belongs to the RbfA family. In terms of assembly, monomer. Binds 30S ribosomal subunits, but not 50S ribosomal subunits or 70S ribosomes.

The protein resides in the cytoplasm. Its function is as follows. One of several proteins that assist in the late maturation steps of the functional core of the 30S ribosomal subunit. Associates with free 30S ribosomal subunits (but not with 30S subunits that are part of 70S ribosomes or polysomes). Required for efficient processing of 16S rRNA. May interact with the 5'-terminal helix region of 16S rRNA. In Pseudarthrobacter chlorophenolicus (strain ATCC 700700 / DSM 12829 / CIP 107037 / JCM 12360 / KCTC 9906 / NCIMB 13794 / A6) (Arthrobacter chlorophenolicus), this protein is Ribosome-binding factor A.